A 186-amino-acid chain; its full sequence is Protein GrpE (186 aa).

A compositionally biased stretch (polar residues) spans 1–13 (MSENTQPEQNQPL). A disordered region spans residues 1–22 (MSENTQPEQNQPLTGAPSPEEL).

It belongs to the GrpE family. Homodimer.

Its subcellular location is the cytoplasm. In terms of biological role, participates actively in the response to hyperosmotic and heat shock by preventing the aggregation of stress-denatured proteins, in association with DnaK and GrpE. It is the nucleotide exchange factor for DnaK and may function as a thermosensor. Unfolded proteins bind initially to DnaJ; upon interaction with the DnaJ-bound protein, DnaK hydrolyzes its bound ATP, resulting in the formation of a stable complex. GrpE releases ADP from DnaK; ATP binding to DnaK triggers the release of the substrate protein, thus completing the reaction cycle. Several rounds of ATP-dependent interactions between DnaJ, DnaK and GrpE are required for fully efficient folding. The polypeptide is Protein GrpE (Polaromonas sp. (strain JS666 / ATCC BAA-500)).